A 196-amino-acid polypeptide reads, in one-letter code: Peptidyl-tRNA hydrolase (196 aa).

Tyrosine 17 is a binding site for tRNA. Histidine 22 (proton acceptor) is an active-site residue. Residues phenylalanine 68, asparagine 70, and asparagine 116 each contribute to the tRNA site.

It belongs to the PTH family. As to quaternary structure, monomer.

The protein localises to the cytoplasm. It catalyses the reaction an N-acyl-L-alpha-aminoacyl-tRNA + H2O = an N-acyl-L-amino acid + a tRNA + H(+). Functionally, hydrolyzes ribosome-free peptidyl-tRNAs (with 1 or more amino acids incorporated), which drop off the ribosome during protein synthesis, or as a result of ribosome stalling. Catalyzes the release of premature peptidyl moieties from peptidyl-tRNA molecules trapped in stalled 50S ribosomal subunits, and thus maintains levels of free tRNAs and 50S ribosomes. The chain is Peptidyl-tRNA hydrolase from Serratia proteamaculans (strain 568).